The chain runs to 327 residues: Aldo-keto reductase family 1 member A1 (327 aa).

NADP(+)-binding positions include G13–G22, T23, W24, and D47. Residue Y52 is the Proton donor of the active site. NADP(+)-binding residues include S164, N165, S213, L215, S217, K265, S266, V267, T268, R271, Q274, and N275.

The protein belongs to the aldo/keto reductase family.

The protein resides in the cytoplasm. It localises to the cytosol. The protein localises to the apical cell membrane. The catalysed reaction is a primary alcohol + NADP(+) = an aldehyde + NADPH + H(+). It carries out the reaction S-nitroso-CoA + NADPH + H(+) = sulfinamide-CoA + NADP(+). It catalyses the reaction S-nitrosoglutathione + NADPH + H(+) = S-(hydroxysulfenamide)glutathione + NADP(+). Its function is as follows. Catalyzes the NADPH-dependent reduction of a wide variety of carbonyl-containing compounds to their corresponding alcohols. Displays enzymatic activity towards endogenous metabolites such as aromatic and aliphatic aldehydes, ketones, monosaccharides and bile acids. Acts as an aldehyde-detoxification enzyme. Also acts as an inhibitor of protein S-nitrosylation by mediating degradation of S-nitroso-coenzyme A (S-nitroso-CoA), a cofactor required to S-nitrosylate proteins. Also acts as a S-nitroso-glutathione reductase by catalyzing the NADPH-dependent reduction of S-nitrosoglutathione. Displays no reductase activity towards retinoids. The chain is Aldo-keto reductase family 1 member A1 (akr1a1) from Xenopus tropicalis (Western clawed frog).